The primary structure comprises 247 residues: ATP synthase subunit a, chloroplastic (247 aa).

5 consecutive transmembrane segments (helical) span residues 36–56 (GQVLMTSWFVFAVIAILSIAG), 95–115 (IPFLGTLFLFIFVSNWSGALI), 134–154 (INTTVALALLTSTAYFYAGFS), 199–219 (LVVGVLVALVPLVVPIPIMLL), and 220–240 (GLFTSGIQALVFATLAGAYIG).

Belongs to the ATPase A chain family. As to quaternary structure, F-type ATPases have 2 components, CF(1) - the catalytic core - and CF(0) - the membrane proton channel. CF(1) has five subunits: alpha(3), beta(3), gamma(1), delta(1), epsilon(1). CF(0) has four main subunits: a, b, b' and c.

The protein localises to the plastid. It is found in the chloroplast thylakoid membrane. Functionally, key component of the proton channel; it plays a direct role in the translocation of protons across the membrane. In Tupiella akineta (Green alga), this protein is ATP synthase subunit a, chloroplastic.